A 762-amino-acid polypeptide reads, in one-letter code: Hyperosmolality-gated Ca2+ permeable channel 2.2 (762 aa).

10 helical membrane passes run 3-23 (VSAL…LVSL), 90-110 (MVIC…AFVL), 144-164 (LWVH…LLYF), 354-374 (IATL…VTFV), 402-422 (VITG…VPPL), 445-465 (KILY…GSVI), 500-520 (GWAG…NLIA), 557-577 (VIAP…YLIY), 594-614 (QYWP…QVIA), and 615-635 (LGFF…PLIL).

Belongs to the CSC1 (TC 1.A.17) family.

Its subcellular location is the membrane. Functionally, acts as an osmosensitive calcium-permeable cation channel. The chain is Hyperosmolality-gated Ca2+ permeable channel 2.2 from Arabidopsis thaliana (Mouse-ear cress).